A 519-amino-acid chain; its full sequence is Exodeoxyribonuclease 7 large subunit (519 aa).

The disordered stretch occupies residues 493–519 (AISTGKSSNTNRKSAPAREPGKQGSLF). The segment covering 496–505 (TGKSSNTNRK) has biased composition (polar residues).

Belongs to the XseA family. As to quaternary structure, heterooligomer composed of large and small subunits.

The protein resides in the cytoplasm. The enzyme catalyses Exonucleolytic cleavage in either 5'- to 3'- or 3'- to 5'-direction to yield nucleoside 5'-phosphates.. Bidirectionally degrades single-stranded DNA into large acid-insoluble oligonucleotides, which are then degraded further into small acid-soluble oligonucleotides. The sequence is that of Exodeoxyribonuclease 7 large subunit from Chelativorans sp. (strain BNC1).